A 333-amino-acid polypeptide reads, in one-letter code: Small GTPase-like protein LIP2 (333 aa).

The segment at 11–288 (NKEHMVAPLC…YKYNTLPQHN (278 aa)) is small GTPase-like. GTP contacts are provided by residues 29 to 36 (GDSGVGKS), 90 to 94 (DVSGH), and 160 to 163 (NKAD). Residues 242–253 (SPSSAWSLSHAP) show a composition bias toward polar residues. The interval 242–265 (SPSSAWSLSHAPSQRLDEGTSDED) is disordered.

Belongs to the small GTPase superfamily.

This Arabidopsis thaliana (Mouse-ear cress) protein is Small GTPase-like protein LIP2.